The sequence spans 576 residues: SNF1-like protein kinase ssp2 (576 aa).

Residues 34–285 (YIIRETLGEG…IQEIRRDPWF (252 aa)) form the Protein kinase domain. ATP is bound by residues 40–48 (LGEGSFGKV) and Lys63. Asp156 serves as the catalytic Proton acceptor. A Phosphothreonine modification is found at Thr189. The auto-inhibitory domain (AID) stretch occupies residues 292–348 (YLRPMEEVQGSYADSRIVSKLGEAMGFSEDYIVEALRSDENNEVKEAYNLLHENQVI). The UBA domain occupies 304–345 (ADSRIVSKLGEAMGFSEDYIVEALRSDENNEVKEAYNLLHEN). Ser442 is modified (phosphoserine).

This sequence belongs to the protein kinase superfamily. CAMK Ser/Thr protein kinase family. SNF1 subfamily. Component of the AMP-activated protein kinase complex also known as the SNF1 kinase complex (Snf1c), a heterotrimeric complex composed of a catalytic subunit alpha and 2 regulatory subunits beta (amk2) and gamma (cbs2). In terms of processing, phosphorylation at Thr-189 by ssp1 is required for nuclear entry in nutritionally stressed cells.

It localises to the cytoplasm. Its subcellular location is the nucleus. The catalysed reaction is L-seryl-[protein] + ATP = O-phospho-L-seryl-[protein] + ADP + H(+). It catalyses the reaction L-threonyl-[protein] + ATP = O-phospho-L-threonyl-[protein] + ADP + H(+). Serine/threonine protein kinase essential for release from glucose repression via the phosphorylation of scr1 upon glucose deprivation. Catalytic subunit of the AMP-activated protein kinase complex also known as the SNF1 kinase complex (Snf1c), a central regulator of cellular energy homeostasis, which, in response to a fall in intracellular ATP levels, activates energy-producing pathways and inhibits energy-consuming processes. The complex phosphorylates histone H3 to form H3S10ph, which promotes H3K14ac formation, leading to transcriptional activation through TBP recruitment to the promoters. Regulates proper cell cycle exit and sexual differentiation. Also regulates ste11 levels under nitrogen deprivation. This is SNF1-like protein kinase ssp2 from Schizosaccharomyces pombe (strain 972 / ATCC 24843) (Fission yeast).